Consider the following 133-residue polypeptide: Acyl-CoA thioester hydrolase YciA (133 aa).

The region spanning 8–123 (PQGELVLRTL…LFIYVAVDPD (116 aa)) is the HotDog ACOT-type domain.

Belongs to the acyl coenzyme A hydrolase family.

Functionally, catalyzes the hydrolysis of the thioester bond in palmitoyl-CoA and malonyl-CoA. This is Acyl-CoA thioester hydrolase YciA (yciA) from Salmonella typhi.